The following is a 952-amino-acid chain: MFKFFSSFGDSNEKEIRALEPLVDKINQLENSFTTLSDEALKAKTIEFRARLKDTFETTTAGIQEDITSTTAELAEAQKIADNSKQSRLKAKLESLNKDLSAKETTALNGILPEAFAAVREASRRTIGLRHYDVQLIGGMVLHHGKIAEMRTGEGKTLVATLPLYLNSLLGKGVHLVTVNDYLARRDAYWMGPVYHALGVSVSSIYPMQTPTEELPSRLFDPDYTSEIPGDPWTHFRPISRQEAYKADITYGTSTEFGFDYLRDNLRPDLAQCVQRDMNYAIVDEIDNLLIDEARTPLIISAPDTEAGKLYDVFARLSPRLVAVKDYEINEKDRNAELTEDGWANVEKLLSREGVMKGNSLYDPQNAPLIRHLRNALSAKEFYKKDHQYVVKEGEIIIIDEFTGRMMLGRRYSEGLHQAIEAKEHVKVQQESKTYATVTIQNLFRMYRKLCGMTGTAATEAEEFSKIYKLEVVIIPTNKPAVREDYGDQIYKDQSAKFKAVVNEIDEMRKLGRPVLVGTVSIENSEMLSNMLKRQGIEHKVLNAKQHEKEAQVVAEAGKPGAVTVATNMAGRGVDILLGGKEPTKDDAKVYNEWQAHHQQVLEAGGLHVIGTERHESRRIDNQLRGRSGRQGDPGSSRFYVALDDDIMRRFGSERIQGIMEWAGMDENTPIENGLVSRTLENAQKRVEGYHFDVRKHLVEYDDVVNKHREVIYAERRKILSGADLKSNILDMIREEIITQTAEHTRGYDSSEWNLDGLVTHLNGIFTLPAEINAEALAKLSQEEITDLLTRTAEELYQKKEDETGAGSMRLLERIIMLHTLDSLWVEHLTIMENLRREIGLQAFAQRDPLIAYKNEGHVRFQELLETIKHDVVHNIYRIGIQIQHQTESATAKAASSPVQQQKPLPAAPAAAIPGVSAKAATQSTTPAAKEIGRNDPCPCGSGKKYKKCCGK.

ATP is bound by residues glutamine 135, 153-157 (GEGKT), and aspartate 575. Residues 614 to 624 (RHESRRIDNQL) show a composition bias toward basic and acidic residues. 2 disordered regions span residues 614-636 (RHESRRIDNQLRGRSGRQGDPGS) and 916-946 (VSAKAATQSTTPAAKEIGRNDPCPCGSGKKY). 4 residues coordinate Zn(2+): cysteine 938, cysteine 940, cysteine 949, and cysteine 950.

Belongs to the SecA family. In terms of assembly, monomer and homodimer. Part of the essential Sec protein translocation apparatus which comprises SecA, SecYEG and auxiliary proteins SecDF. Other proteins may also be involved. The cofactor is Zn(2+).

Its subcellular location is the cell membrane. It is found in the cytoplasm. It catalyses the reaction ATP + H2O + cellular proteinSide 1 = ADP + phosphate + cellular proteinSide 2.. Part of the Sec protein translocase complex. Interacts with the SecYEG preprotein conducting channel. Has a central role in coupling the hydrolysis of ATP to the transfer of proteins into and across the cell membrane, serving as an ATP-driven molecular motor driving the stepwise translocation of polypeptide chains across the membrane. The chain is Protein translocase subunit SecA from Dehalococcoides mccartyi (strain ATCC BAA-2100 / JCM 16839 / KCTC 5957 / BAV1).